The chain runs to 396 residues: Tryptophan synthase beta chain (396 aa).

Residue lysine 86 is modified to N6-(pyridoxal phosphate)lysine.

The protein belongs to the TrpB family. As to quaternary structure, tetramer of two alpha and two beta chains. Pyridoxal 5'-phosphate serves as cofactor.

The catalysed reaction is (1S,2R)-1-C-(indol-3-yl)glycerol 3-phosphate + L-serine = D-glyceraldehyde 3-phosphate + L-tryptophan + H2O. It participates in amino-acid biosynthesis; L-tryptophan biosynthesis; L-tryptophan from chorismate: step 5/5. Functionally, the beta subunit is responsible for the synthesis of L-tryptophan from indole and L-serine. This is Tryptophan synthase beta chain from Vibrio campbellii (strain ATCC BAA-1116).